Reading from the N-terminus, the 139-residue chain is Putative nickel-responsive regulator (139 aa).

Residues H79, H90, H92, and C98 each coordinate Ni(2+).

The protein belongs to the transcriptional regulatory CopG/NikR family. Ni(2+) is required as a cofactor.

In terms of biological role, transcriptional regulator. This is Putative nickel-responsive regulator from Geobacter metallireducens (strain ATCC 53774 / DSM 7210 / GS-15).